The chain runs to 89 residues: Acylphosphatase (89 aa).

Positions 4–89 (SYIAHISGRV…WQEHHFFSIG (86 aa)) constitute an Acylphosphatase-like domain. Active-site residues include arginine 19 and asparagine 37.

Belongs to the acylphosphatase family.

It carries out the reaction an acyl phosphate + H2O = a carboxylate + phosphate + H(+). This is Acylphosphatase (acyP) from Colwellia psychrerythraea (strain 34H / ATCC BAA-681) (Vibrio psychroerythus).